The sequence spans 385 residues: Lipid-A-disaccharide synthase 2 (385 aa).

Belongs to the LpxB family.

It catalyses the reaction a lipid X + a UDP-2-N,3-O-bis[(3R)-3-hydroxyacyl]-alpha-D-glucosamine = a lipid A disaccharide + UDP + H(+). Its pathway is bacterial outer membrane biogenesis; LPS lipid A biosynthesis. In terms of biological role, condensation of UDP-2,3-diacylglucosamine and 2,3-diacylglucosamine-1-phosphate to form lipid A disaccharide, a precursor of lipid A, a phosphorylated glycolipid that anchors the lipopolysaccharide to the outer membrane of the cell. This is Lipid-A-disaccharide synthase 2 from Legionella pneumophila (strain Paris).